The chain runs to 88 residues: Small ribosomal subunit protein bS16c (88 aa).

It belongs to the bacterial ribosomal protein bS16 family.

It localises to the plastid. The protein localises to the chloroplast. This is Small ribosomal subunit protein bS16c from Lactuca sativa (Garden lettuce).